The chain runs to 181 residues: Capsid protein VP4 (181 aa).

It is found in the virion. Its function is as follows. VP4 self-assembles to form, together with capsid protein VP10, an icosahedral caspid of 87 nm in diameter, with a T=43 symmetry and composed of 420 hexamers and 12 pentamers. VP4 proteins arrange into hexons, while VP10 proteins form the pentameric densities located at the 5-fold axes in the virion. The stoichiometry of VP4:VP10 is 42:1. In Sulfolobus (SPV1), this protein is Capsid protein VP4.